The following is a 322-amino-acid chain: NADH-cytochrome b5 reductase 2 (322 aa).

The helical transmembrane segment at 31–48 (LAPIYAAVGITGVGVGLY) threads the bilayer. The region spanning 72–176 (QGWFDLKLSE…KGPIVKYPWE (105 aa)) is the FAD-binding FR-type domain. 179–214 (KHNHICLIAGGTGITPMYQLAREIFKNPEDQTKVTL) is a binding site for FAD.

The protein belongs to the flavoprotein pyridine nucleotide cytochrome reductase family. FAD is required as a cofactor.

The protein localises to the mitochondrion outer membrane. It carries out the reaction 2 Fe(III)-[cytochrome b5] + NADH = 2 Fe(II)-[cytochrome b5] + NAD(+) + H(+). May mediate the reduction of outer membrane cytochrome b5. In Aspergillus niger (strain ATCC MYA-4892 / CBS 513.88 / FGSC A1513), this protein is NADH-cytochrome b5 reductase 2 (mcr1).